A 206-amino-acid chain; its full sequence is Phosphoheptose isomerase (206 aa).

The SIS domain maps to 37 to 195 (LVDAFKAGKK…IEQKMDINNE (159 aa)). Substrate is bound at residue 52-54 (NGG). Zn(2+)-binding residues include His-61 and Glu-65. Residues Glu-65, 93-94 (ND), 119-121 (STS), Ser-124, and Gln-172 contribute to the substrate site. Gln-172 and His-180 together coordinate Zn(2+).

It belongs to the SIS family. GmhA subfamily. Homotetramer. Zn(2+) is required as a cofactor.

It is found in the cytoplasm. The catalysed reaction is 2 D-sedoheptulose 7-phosphate = D-glycero-alpha-D-manno-heptose 7-phosphate + D-glycero-beta-D-manno-heptose 7-phosphate. Its pathway is carbohydrate biosynthesis; D-glycero-D-manno-heptose 7-phosphate biosynthesis; D-glycero-alpha-D-manno-heptose 7-phosphate and D-glycero-beta-D-manno-heptose 7-phosphate from sedoheptulose 7-phosphate: step 1/1. In terms of biological role, catalyzes the isomerization of sedoheptulose 7-phosphate in D-glycero-D-manno-heptose 7-phosphate. The polypeptide is Phosphoheptose isomerase (Hamiltonella defensa subsp. Acyrthosiphon pisum (strain 5AT)).